Here is a 505-residue protein sequence, read N- to C-terminus: uncharacterized protein (505 aa).

Over residues 1–16 (MPPTASLTRSPPTASQ) the composition is skewed to polar residues. A disordered region spans residues 1 to 474 (MPPTASLTRS…TPPTASLTRT (474 aa)). 2 stretches are compositionally biased toward low complexity: residues 17 to 33 (TRTL…PRAS) and 40 to 59 (TASL…PPRA). Over residues 66-78 (SRASLTRTLSRAS) the composition is skewed to polar residues. Low complexity-rich tracts occupy residues 96 to 122 (SLTR…PPRT), 129 to 140 (PRTSQTRTPPRA), and 147 to 158 (SRASRTRTPPRA). 2 stretches are compositionally biased toward polar residues: residues 165–177 (SRAS…SRAS) and 188–200 (TRTP…TRTP). A compositionally biased stretch (low complexity) spans 201-226 (PTASLTRASRTRTPPRTSQTRTPPRA). 7 stretches are compositionally biased toward polar residues: residues 233-254 (SRAS…SRAS), 265-293 (TRTP…SLTR), 309-329 (LTRT…SLTR), 345-365 (LTRT…SLTR), 373-383 (TRTPSRASLTR), 399-408 (LTRSPPTASL), and 435-448 (LTRS…TRTP). Low complexity predominate over residues 453–474 (LRRTPPRTSLTRTPPTASLTRT).

This is an uncharacterized protein from Homo sapiens (Human).